A 754-amino-acid polypeptide reads, in one-letter code: Probable beta-glucosidase D (754 aa).

Positions 1–20 (MKVLSFIVAAALLGLTGASS) are cleaved as a signal peptide. Asn-66, Asn-69, and Asn-186 each carry an N-linked (GlcNAc...) asparagine glycan. Residues 186 to 206 (NRTGGGGGGGGDSGSAPYSSN) are disordered. Residues 188 to 198 (TGGGGGGGGDS) show a composition bias toward gly residues. An N-linked (GlcNAc...) asparagine glycan is attached at Asn-239. Asp-267 is an active-site residue. N-linked (GlcNAc...) asparagine glycans are attached at residues Asn-301, Asn-345, Asn-443, Asn-512, Asn-534, Asn-573, Asn-588, Asn-655, and Asn-745.

The protein belongs to the glycosyl hydrolase 3 family.

It is found in the secreted. The enzyme catalyses Hydrolysis of terminal, non-reducing beta-D-glucosyl residues with release of beta-D-glucose.. It participates in glycan metabolism; cellulose degradation. Its function is as follows. Beta-glucosidases are one of a number of cellulolytic enzymes involved in the degradation of cellulosic biomass. Catalyzes the last step releasing glucose from the inhibitory cellobiose. The polypeptide is Probable beta-glucosidase D (bglD) (Aspergillus niger (strain ATCC MYA-4892 / CBS 513.88 / FGSC A1513)).